Consider the following 293-residue polypeptide: MPSLKDLKNRIASVKATQKITKAMKMVAAAKLRRAQEAAEAARPYSQRMAAVLANIAQAVGADDSAPALMTGTGRDNTHLLVVCTAERGLCGGFNSQIARFARDHVRKLLAQGKTVKIICVGKKGFDILRREFASLIIDRVDLREVKKIGFENADRIGHKVIELFEKGEFDVCTLFYSEFKSVISQVPTAQQLIPASAGPVAAEADSASAVYEYEPDAAAILTDLIPRNISVQIFRALLENVAGEMGAKMSAMDNATRNAGEMINKLTLNYNRQRQAQITKELIEIISGAEAL.

The protein belongs to the ATPase gamma chain family. As to quaternary structure, F-type ATPases have 2 components, CF(1) - the catalytic core - and CF(0) - the membrane proton channel. CF(1) has five subunits: alpha(3), beta(3), gamma(1), delta(1), epsilon(1). CF(0) has three main subunits: a, b and c.

The protein localises to the cell inner membrane. Functionally, produces ATP from ADP in the presence of a proton gradient across the membrane. The gamma chain is believed to be important in regulating ATPase activity and the flow of protons through the CF(0) complex. The protein is ATP synthase gamma chain of Sinorhizobium fredii (strain NBRC 101917 / NGR234).